A 209-amino-acid polypeptide reads, in one-letter code: Uracil phosphoribosyltransferase (209 aa).

Residues arginine 79, arginine 104, and 131-139 (DPMLATGGS) each bind 5-phospho-alpha-D-ribose 1-diphosphate. Residues isoleucine 194 and 199 to 201 (GDA) each bind uracil. Aspartate 200 contacts 5-phospho-alpha-D-ribose 1-diphosphate.

Belongs to the UPRTase family. Requires Mg(2+) as cofactor.

The enzyme catalyses UMP + diphosphate = 5-phospho-alpha-D-ribose 1-diphosphate + uracil. Its pathway is pyrimidine metabolism; UMP biosynthesis via salvage pathway; UMP from uracil: step 1/1. Allosterically activated by GTP. Catalyzes the conversion of uracil and 5-phospho-alpha-D-ribose 1-diphosphate (PRPP) to UMP and diphosphate. This is Uracil phosphoribosyltransferase from Ligilactobacillus salivarius (strain UCC118) (Lactobacillus salivarius).